A 1041-amino-acid chain; its full sequence is FHIP family protein GF15501 (1041 aa).

2 disordered regions span residues 797–856 and 907–987; these read RKGN…NKRR and SNSS…SEPV. Phosphoserine is present on Ser-803. Positions 808-824 are enriched in low complexity; sequence NLQQQQALNPAQQQGQQ. Polar residues-rich tracts occupy residues 825 to 843 and 907 to 933; these read RSAY…TPTS and SNSS…LSTQ. Residues 942–973 show a composition bias toward low complexity; the sequence is SGSSSNSSMGGSSQTLSAHSNATTTHSSSTLH.

The protein belongs to the FHIP family.

This is FHIP family protein GF15501 from Drosophila ananassae (Fruit fly).